The primary structure comprises 352 residues: Nicotinate-nucleotide--dimethylbenzimidazole phosphoribosyltransferase (352 aa).

E316 acts as the Proton acceptor in catalysis.

This sequence belongs to the CobT family.

The enzyme catalyses 5,6-dimethylbenzimidazole + nicotinate beta-D-ribonucleotide = alpha-ribazole 5'-phosphate + nicotinate + H(+). It functions in the pathway nucleoside biosynthesis; alpha-ribazole biosynthesis; alpha-ribazole from 5,6-dimethylbenzimidazole: step 1/2. In terms of biological role, catalyzes the synthesis of alpha-ribazole-5'-phosphate from nicotinate mononucleotide (NAMN) and 5,6-dimethylbenzimidazole (DMB). This is Nicotinate-nucleotide--dimethylbenzimidazole phosphoribosyltransferase from Ruminiclostridium cellulolyticum (strain ATCC 35319 / DSM 5812 / JCM 6584 / H10) (Clostridium cellulolyticum).